Reading from the N-terminus, the 425-residue chain is Enolase (425 aa).

Gln163 is a (2R)-2-phosphoglycerate binding site. Glu205 serves as the catalytic Proton donor. Mg(2+) contacts are provided by Asp242, Glu285, and Asp312. The (2R)-2-phosphoglycerate site is built by Lys337, Arg366, Ser367, and Lys388. Lys337 acts as the Proton acceptor in catalysis.

The protein belongs to the enolase family. It depends on Mg(2+) as a cofactor.

It localises to the cytoplasm. The protein resides in the secreted. Its subcellular location is the cell surface. It catalyses the reaction (2R)-2-phosphoglycerate = phosphoenolpyruvate + H2O. It participates in carbohydrate degradation; glycolysis; pyruvate from D-glyceraldehyde 3-phosphate: step 4/5. Functionally, catalyzes the reversible conversion of 2-phosphoglycerate (2-PG) into phosphoenolpyruvate (PEP). It is essential for the degradation of carbohydrates via glycolysis. This chain is Enolase, found in Paracoccus denitrificans (strain Pd 1222).